The chain runs to 191 residues: MELEVFAGQEKSELSMIEVARAILEQRGRDNEMYFSDLVNDIQTYLGKSDSAIRESLPFFYSDLNTDGSFIPLGENKWGLRSWYAIDEIDEEIITLEEDEDGAPKRKKKRVNAFMDGDEDAIDYNDDDPEDEDFTEETPSLEYDEENPDDEKSEVESYDSEINEIIPDEDLDEDVEINEEDDEEEEEEEEV.

In terms of domain architecture, HTH HARE-type spans 14 to 83 (LSMIEVARAI…GENKWGLRSW (70 aa)). 2 stretches are compositionally biased toward acidic residues: residues 117 to 136 (GDEDAIDYNDDDPEDEDFTE) and 142 to 191 (EYDE…EEEV). Residues 117-191 (GDEDAIDYND…DEEEEEEEEV (75 aa)) form a disordered region.

This sequence belongs to the RpoE family. In terms of assembly, RNAP is composed of a core of 2 alpha, a beta and a beta' subunits. The core is associated with a delta subunit and one of several sigma factors.

Functionally, participates in both the initiation and recycling phases of transcription. In the presence of the delta subunit, RNAP displays an increased specificity of transcription, a decreased affinity for nucleic acids, and an increased efficiency of RNA synthesis because of enhanced recycling. This is Probable DNA-directed RNA polymerase subunit delta from Streptococcus agalactiae serotype Ia (strain ATCC 27591 / A909 / CDC SS700).